We begin with the raw amino-acid sequence, 853 residues long: Protein translocase subunit SecA 1 (853 aa).

Residues Gln85, 103-107 (GEGKT), and Asp492 each bind ATP.

The protein belongs to the SecA family. In terms of assembly, monomer and homodimer. Part of the essential Sec protein translocation apparatus which comprises SecA, SecYEG and auxiliary proteins SecDF. Other proteins may also be involved.

It is found in the cell membrane. The protein resides in the cytoplasm. The catalysed reaction is ATP + H2O + cellular proteinSide 1 = ADP + phosphate + cellular proteinSide 2.. Functionally, part of the Sec protein translocase complex. Interacts with the SecYEG preprotein conducting channel. Has a central role in coupling the hydrolysis of ATP to the transfer of proteins into and across the cell membrane, serving as an ATP-driven molecular motor driving the stepwise translocation of polypeptide chains across the membrane. This is Protein translocase subunit SecA 1 from Corynebacterium diphtheriae (strain ATCC 700971 / NCTC 13129 / Biotype gravis).